Reading from the N-terminus, the 315-residue chain is Melanoma-associated antigen 9 (315 aa).

Basic and acidic residues predominate over residues 1-13; it reads MSLEQRSPHCKPD. A disordered region spans residues 1–67; that stretch reads MSLEQRSPHC…PQSPQGGASS (67 aa). The span at 50–67 shows a compositional bias: low complexity; that stretch reads SAAGSSSPPQSPQGGASS. An MAGE domain is found at 108 to 307; that stretch reads LKLKVAELVH…ICYPSLYEEV (200 aa).

As to expression, expressed in many tumors of several types, such as melanoma, head and neck squamous cell carcinoma, lung carcinoma and breast carcinoma, but not in normal tissues except for testes and placenta.

Not known, though may play a role in embryonal development and tumor transformation or aspects of tumor progression. In Homo sapiens (Human), this protein is Melanoma-associated antigen 9 (MAGEA9).